Here is a 273-residue protein sequence, read N- to C-terminus: Bidirectional sugar transporter SWEET1a (273 aa).

Over M1–R6 the chain is Extracellular. A helical membrane pass occupies residues F7–T27. One can recognise a MtN3/slv 1 domain in the interval F7–K95. Topologically, residues F28 to G42 are cytoplasmic. Residues V43–V63 traverse the membrane as a helical segment. At S64–T71 the chain is on the extracellular side. Residues T72–A92 form a helical membrane-spanning segment. Residues E93–M101 are Cytoplasmic-facing. A helical transmembrane segment spans residues G102–L122. At H123 to K128 the chain is on the extracellular side. Residues L129–I149 traverse the membrane as a helical segment. Residues C131–K214 enclose the MtN3/slv 2 domain. Residues M150–P163 lie on the Cytoplasmic side of the membrane. Residues F164 to G184 traverse the membrane as a helical segment. At R185 to F188 the chain is on the extracellular side. The chain crosses the membrane as a helical span at residues I189–I209. At Y210–V273 the chain is on the cytoplasmic side.

This sequence belongs to the SWEET sugar transporter family. As to quaternary structure, forms homooligomers and/or heterooligomers.

Its subcellular location is the cell membrane. Functionally, mediates both low-affinity uptake and efflux of sugar across the plasma membrane. In Oryza sativa subsp. japonica (Rice), this protein is Bidirectional sugar transporter SWEET1a (SWEET1A).